The primary structure comprises 269 residues: Putative carbamate hydrolase RutD (269 aa).

An AB hydrolase-1 domain is found at 26–144 (VVLLSSGLGG…CFDTRLHLLN (119 aa)).

This sequence belongs to the AB hydrolase superfamily. Hydrolase RutD family.

The catalysed reaction is carbamate + 2 H(+) = NH4(+) + CO2. In terms of biological role, involved in pyrimidine catabolism. May facilitate the hydrolysis of carbamate, a reaction that can also occur spontaneously. The chain is Putative carbamate hydrolase RutD from Caulobacter vibrioides (strain ATCC 19089 / CIP 103742 / CB 15) (Caulobacter crescentus).